Here is a 741-residue protein sequence, read N- to C-terminus: Zinc metalloproteinase nas-30 (741 aa).

Low complexity-rich tracts occupy residues 71–85 and 97–118; these read KPAPAAAGPRSAPAP and PAPKAKARAAPTPRRAQADAPP. The tract at residues 71 to 122 is disordered; sequence KPAPAAAGPRSAPAPTNEDYNTDIDVPAPKAKARAAPTPRRAQADAPPVYRQ. Residues 324-516 enclose the Peptidase M12A domain; sequence KVITGSVYRW…VKQVNRLYCN (193 aa). 6 disulfides stabilise this stretch: Cys-364-Cys-515, Cys-385-Cys-404, Cys-519-Cys-539, Cys-541-Cys-550, Cys-562-Cys-583, and Cys-610-Cys-630. His-412 is a Zn(2+) binding site. Glu-413 is an active-site residue. Zn(2+) is bound by residues His-416 and His-422. The 12-residue stretch at 539–550 folds into the EGF-like domain; the sequence is CKCPDGLGGKLC. The region spanning 550–648 is the CUB domain; it reads CGRAAKGTDH…ISDQSEALIL (99 aa). The N-linked (GlcNAc...) asparagine glycan is linked to Asn-633.

Zn(2+) serves as cofactor.

Metalloprotease. This is Zinc metalloproteinase nas-30 from Caenorhabditis elegans.